The primary structure comprises 429 residues: Acetylornithine aminotransferase (429 aa).

Residues 126–127 (GA) and Phe160 each bind pyridoxal 5'-phosphate. Residue Arg163 coordinates N(2)-acetyl-L-ornithine. 251–254 (DEVQ) contacts pyridoxal 5'-phosphate. Residue Lys280 is modified to N6-(pyridoxal phosphate)lysine. A N(2)-acetyl-L-ornithine-binding site is contributed by Ser307. Thr308 contacts pyridoxal 5'-phosphate.

This sequence belongs to the class-III pyridoxal-phosphate-dependent aminotransferase family. ArgD subfamily. Homodimer. Requires pyridoxal 5'-phosphate as cofactor.

It localises to the cytoplasm. It catalyses the reaction N(2)-acetyl-L-ornithine + 2-oxoglutarate = N-acetyl-L-glutamate 5-semialdehyde + L-glutamate. It functions in the pathway amino-acid biosynthesis; L-arginine biosynthesis; N(2)-acetyl-L-ornithine from L-glutamate: step 4/4. N-acetylornithine aminotransferase activity is stimulated by the addition of Mg(2+), Ca(2+) or Mn(2+), and inhibited by the addition of Zn(2+), Cu(2+), Co(2+) or Ni(2+). In terms of biological role, catalyzes the reversible conversion of N-acetylornithine to N-acetylglutamate-5-semialdehyde. In vitro, also shows very low ornithine aminotransferase (OAT) and gamma-aminobutyrate aminotransferase (GABA-AT) activity, catalyzing the conversion of ornithine (Orn) to glutamate-5-semialdehyde and of gamma-aminobutyric acid (GABA) to succinate semialdehyde. It has been shown to function as a GABA-AT and contributes to closing the tricarboxylic acid cycle of Synechocystis sp. PCC6803 via the GABA shunt. However, the catalytic efficiency toward N-acetylornithine is 2500-fold and 10700-fold higher than that toward ornithine and gamma-aminobutyrate, respectively, indicating that the protein mainly functions as an N-acetylornithine aminotransferase. In Synechocystis sp. (strain ATCC 27184 / PCC 6803 / Kazusa), this protein is Acetylornithine aminotransferase.